A 142-amino-acid chain; its full sequence is Hemoglobin subunit alpha (142 aa).

The Globin domain occupies 2–142; it reads VLSPADKSNV…VSTVLTSKYR (141 aa). Position 4 is a phosphoserine (S4). N6-succinyllysine is present on residues K8 and K12. K17 bears the N6-acetyllysine; alternate mark. N6-succinyllysine; alternate is present on K17. Y25 carries the post-translational modification Phosphotyrosine. S36 carries the post-translational modification Phosphoserine. K41 carries the post-translational modification N6-succinyllysine. A Phosphoserine modification is found at S50. An O2-binding site is contributed by H59. H88 provides a ligand contact to heme b. S103 is subject to Phosphoserine. The residue at position 109 (T109) is a Phosphothreonine. A Phosphoserine modification is found at S125. Phosphothreonine occurs at positions 135 and 138. Position 139 is a phosphoserine (S139).

This sequence belongs to the globin family. Heterotetramer of two alpha chains and two beta chains. As to expression, red blood cells.

Functionally, involved in oxygen transport from the lung to the various peripheral tissues. Hemopressin acts as an antagonist peptide of the cannabinoid receptor CNR1. Hemopressin-binding efficiently blocks cannabinoid receptor CNR1 and subsequent signaling. In Ursus maritimus (Polar bear), this protein is Hemoglobin subunit alpha (HBA).